The following is a 750-amino-acid chain: Nibrin (750 aa).

Positions 24–83 (YIVGRKNCAILIENDQSISRNHAVLRVNFPVTSLSQTDEIPTLTIKDNSKYGTFINEEKM) constitute an FHA domain. 2 consecutive BRCT domains span residues 105-181 (KFRV…SEFL) and 224-315 (GKTF…LAVI). A mediates interaction with SP100 region spans residues 111 to 328 (EPLVVCSSCL…TESYCNPQGQ (218 aa)). The tract at residues 221–403 (IFKGKTFVFL…SRKLLQGTCN (183 aa)) is interaction with MTOR, MAPKAP1 and RICTOR. T337 bears the Phosphothreonine mark. S343 carries the post-translational modification Phosphoserine; by ATM. S347 and S433 each carry phosphoserine. Disordered stretches follow at residues 429 to 479 (NYQL…SSCK) and 494 to 550 (QPAG…RKRK). K436 is covalently cross-linked (Glycyl lysine isopeptide (Lys-Gly) (interchain with G-Cter in ubiquitin)). Residues 446–457 (WSSQQQLNSIKN) show a composition bias toward polar residues. Residues 461 to 467 (PCSRKRE) carry the Nuclear localization signal motif. Residues 502 to 514 (KSKDHESQSETLD) show a composition bias toward basic and acidic residues. Phosphoserine is present on residues S508 and S517. A Glycyl lysine isopeptide (Lys-Gly) (interchain with G-Cter in SUMO2) cross-link involves residue K528. The segment covering 540-550 (STEDLRARKRK) has biased composition (basic and acidic residues). Glycyl lysine isopeptide (Lys-Gly) (interchain with G-Cter in SUMO2) cross-links involve residues K569 and K580. Positions 581 to 599 (QEADVSIRKKPRMDAERNQ) are enriched in basic and acidic residues. Residues 581 to 622 (QEADVSIRKKPRMDAERNQHLNGGPVPESNSALQEDETGKKD) form a disordered region. Glycyl lysine isopeptide (Lys-Gly) (interchain with G-Cter in ubiquitin) cross-links involve residues K683, K687, and K732. Positions 737–746 (ADDLFRYNPN) match the FxF/Y motif motif.

The protein belongs to the Nibrin family. In terms of assembly, component of the MRN complex composed of two heterodimers RAD50 and MRE11 associated with a single NBN. The MRN complexes dimerize on DNA to form joined MRN-MRN oligomers required for DNA double-strand break repair. The MRN complexes dimerize on DNA to form joined MRN-MRN oligomers required for DNA double-strand break repair. As part of the MRN complex, interacts with MCM9; the interaction recruits the complex to DNA repair sites. Component of the BASC complex, at least composed of BRCA1, MSH2, MSH6, MLH1, ATM, BLM, RAD50, MRE11 and NBN. Interacts with histone H2AX; this requires phosphorylation of H2AX on 'Ser-139' and promotes NBN recruitment to DNA damage sites. Interacts with (phosphorylated) MDC1; promoting NBN recruitment to DNA damage sites. Interacts with (phosphorylated) RAD17; promoting NBN recruitment to DNA damage sites. Interacts (via FxF/Y motif) with ATM. Interacts with HJURP. Interacts with INTS3. Interacts with KPNA2. Interacts with TERF2; interaction is disrupted upon NBN phosphorylation by CDK2. Interacts with (phosphorylated) RBBP8/CtIP; the interaction links the role of the MRN complex in DNA double-strand break sensing to resection. Interacts with SP100; recruits NBN to PML bodies. Interacts with ATF2. Interacts with MTOR, MAPKAP1 isoform 2 and RICTOR; indicative for an association with the mTORC2 complex. Interacts with MRNIP. Interacts with UFL1; promoting UFL1 recruitment to double-strand breaks following DNA damage. Interacts with CYREN (via XLF motif). In terms of processing, phosphorylated by ATM in response of ionizing radiation, and such phosphorylation is responsible intra-S phase checkpoint control and telomere maintenance. Phosphorylated at Ser-433 by CDK2 in S/G2 phases abolishes interaction with TERF2, enabling DCLRE1B/Apollo recruitment to telomeres. Phosphorylation at Ser-433 in response to dysfunctional telomeres promotes non-homologous end joining repair at telomeres, while dephosphorylation by PPP1CA promotes microhomology-mediated end-joining (MMEJ) repair. Ubiquitinated at Lys-436 via 'Lys-6'-linked ubiquitin chains by RNF8, promoting NBN recruitment to DNA double-strand breaks (DSBs). Ubiquitinated at Lys-687 via 'Lys-63'-linked ubiquitin chains by PELI1: ubiquitination takes place following PELI1 phosphorylation and promotes ATM activation and DNA repair. Ubiquitinated at Lys-732 via 'Lys-63'-linked ubiquitin chains by the SCF(SKP2) complex: ubiquitination takes place following SKP2 phosphorylation and promotes ATM activation and DNA repair. In terms of tissue distribution, present at approximately equal levels in the heart at fetal day 17, at relatively constant levels at postnatal days 10, 17 and 21 and at slightly lower levels in the adult heart. Barely detectable in the brain. Not detected in kidney, very low levels in liver and skeletal muscle and moderate levels in heart, lung and brain (at protein level).

Its subcellular location is the nucleus. The protein localises to the chromosome. It localises to the PML body. It is found in the telomere. Functionally, component of the MRN complex, which plays a central role in double-strand break (DSB) repair, DNA recombination, maintenance of telomere integrity and meiosis. The MRN complex is involved in the repair of DNA double-strand breaks (DSBs) via homologous recombination (HR), an error-free mechanism which primarily occurs during S and G2 phases. The complex (1) mediates the end resection of damaged DNA, which generates proper single-stranded DNA, a key initial steps in HR, and is (2) required for the recruitment of other repair factors and efficient activation of ATM and ATR upon DNA damage. The MRN complex possesses single-strand endonuclease activity and double-strand-specific 3'-5' exonuclease activity, which are provided by MRE11, to initiate end resection, which is required for single-strand invasion and recombination. Within the MRN complex, NBN acts as a protein-protein adapter, which specifically recognizes and binds phosphorylated proteins, promoting their recruitment to DNA damage sites. Recruits MRE11 and RAD50 components of the MRN complex to DSBs in response to DNA damage. Promotes the recruitment of PI3/PI4-kinase family members ATM, ATR, and probably DNA-PKcs to the DNA damage sites, activating their functions. Mediates the recruitment of phosphorylated RBBP8/CtIP to DSBs, leading to cooperation between the MRN complex and RBBP8/CtIP to initiate end resection. RBBP8/CtIP specifically promotes the endonuclease activity of the MRN complex to clear DNA ends containing protein adducts. The MRN complex is also required for the processing of R-loops. NBN also functions in telomere length maintenance via its interaction with TERF2: interaction with TERF2 during G1 phase preventing recruitment of DCLRE1B/Apollo to telomeres. NBN also promotes DNA repair choice at dysfunctional telomeres: NBN phosphorylation by CK2 promotes non-homologous end joining repair at telomeres, while unphosphorylated NBN promotes microhomology-mediated end-joining (MMEJ) repair. Enhances AKT1 phosphorylation possibly by association with the mTORC2 complex. This Rattus norvegicus (Rat) protein is Nibrin (Nbn).